The chain runs to 645 residues: Rab11 family-interacting protein 5 (645 aa).

The C2 domain maps to 1–146; the sequence is MALVRDPEPA…AGRAQHTQWY (146 aa). Phosphoserine is present on residues Ser-176, Ser-283, Ser-286, Ser-307, Ser-357, and Ser-367. The tract at residues 271-299 is disordered; it reads GAELLTRSPSHSSWLSTEGGRDSIQSPKL. A compositionally biased stretch (polar residues) spans 277 to 286; sequence RSPSHSSWLS. The segment at 341–550 is disordered; it reads SHVYNEEPQP…STALSSGLER (210 aa). The segment covering 357 to 374 has biased composition (low complexity); the sequence is SISGPFPPSSSLHSVPPR. Residues 375-387 show a composition bias toward basic and acidic residues; sequence SSEEGSRSSDDSW. Phosphoserine occurs at positions 391 and 395. Positions 452 to 463 are enriched in basic residues; it reads RMGLFHHHHHQG. Ser-486, Ser-530, Ser-539, Ser-545, and Ser-640 each carry phosphoserine. One can recognise an FIP-RBD domain in the interval 578–640; it reads KDSAVLDQSA…ETSPTLLQIS (63 aa).

Interacts with RAB11FIP4. Interacts with NAPG. Interacts with RO60. Interacts with RAB11A that has been activated by GTP binding. Post-translationally, phosphorylated on serine and threonine residues. Phosphorylation at Ser-357 is PKA-dependent.

The protein resides in the cytoplasm. It localises to the recycling endosome membrane. Its subcellular location is the early endosome membrane. It is found in the golgi apparatus membrane. The protein localises to the cytoplasmic vesicle. The protein resides in the secretory vesicle membrane. It localises to the mitochondrion membrane. Functionally, rab effector involved in protein trafficking from apical recycling endosomes to the apical plasma membrane. Involved in insulin granule exocytosis. May regulate V-ATPase intracellular transport in response to extracellular acidosis. This Mus musculus (Mouse) protein is Rab11 family-interacting protein 5.